The following is a 252-amino-acid chain: Mediator of RNA polymerase II transcription subunit 8 (252 aa).

A coiled-coil region spans residues 117 to 142; the sequence is TEQKMLQNEQKAANLTNDAAMKQVTQ. Low complexity predominate over residues 215–224; it reads PMGGPAMSPG. Residues 215–252 are disordered; it reads PMGGPAMSPGNVQQQLGKAPSAVKTNIKSANQVHPFSR. Positions 237–252 are enriched in polar residues; the sequence is VKTNIKSANQVHPFSR.

It belongs to the Mediator complex subunit 8 family. As to quaternary structure, component of the Mediator complex.

Its subcellular location is the nucleus. Functionally, component of the Mediator complex, a coactivator involved in the regulated transcription of nearly all RNA polymerase II-dependent genes. Mediator functions as a bridge to convey information from gene-specific regulatory proteins to the basal RNA polymerase II transcription machinery. Mediator is recruited to promoters by direct interactions with regulatory proteins and serves as a scaffold for the assembly of a functional preinitiation complex with RNA polymerase II and the general transcription factors. Required for activated transcription of the MtnA and MtnB genes. This Drosophila melanogaster (Fruit fly) protein is Mediator of RNA polymerase II transcription subunit 8 (MED8).